We begin with the raw amino-acid sequence, 37 residues long: Large ribosomal subunit protein bL36 (37 aa).

It belongs to the bacterial ribosomal protein bL36 family.

This chain is Large ribosomal subunit protein bL36, found in Treponema pallidum (strain Nichols).